The sequence spans 382 residues: Galactokinase (382 aa).

A substrate-binding site is contributed by 34–37 (EHTD). An ATP-binding site is contributed by 124–130 (GAGLSSS). Positions 130 and 162 each coordinate Mg(2+). D174 functions as the Proton acceptor in the catalytic mechanism. Y223 is a binding site for substrate.

The protein belongs to the GHMP kinase family. GalK subfamily.

The protein resides in the cytoplasm. The enzyme catalyses alpha-D-galactose + ATP = alpha-D-galactose 1-phosphate + ADP + H(+). It functions in the pathway carbohydrate metabolism; galactose metabolism. In terms of biological role, catalyzes the transfer of the gamma-phosphate of ATP to D-galactose to form alpha-D-galactose-1-phosphate (Gal-1-P). This is Galactokinase from Salmonella paratyphi C (strain RKS4594).